A 913-amino-acid chain; its full sequence is Bifunctional uridylyltransferase/uridylyl-removing enzyme (913 aa).

The uridylyltransferase stretch occupies residues 1–358 (MFNCDVTAID…PDEERPKKQP (358 aa)). The interval 359–729 (INARFNQVGD…EHRELALDAV (371 aa)) is uridylyl-removing. The region spanning 476-592 (VDAHTLFLIR…TLFADLVGNV (117 aa)) is the HD domain. ACT domains lie at 730–815 (QVFV…RIPR) and 838–913 (IMSL…NDRV).

The protein belongs to the GlnD family. Requires Mg(2+) as cofactor.

It carries out the reaction [protein-PII]-L-tyrosine + UTP = [protein-PII]-uridylyl-L-tyrosine + diphosphate. The enzyme catalyses [protein-PII]-uridylyl-L-tyrosine + H2O = [protein-PII]-L-tyrosine + UMP + H(+). With respect to regulation, uridylyltransferase (UTase) activity is inhibited by glutamine, while glutamine activates uridylyl-removing (UR) activity. Its function is as follows. Modifies, by uridylylation and deuridylylation, the PII regulatory proteins (GlnB and homologs), in response to the nitrogen status of the cell that GlnD senses through the glutamine level. Under low glutamine levels, catalyzes the conversion of the PII proteins and UTP to PII-UMP and PPi, while under higher glutamine levels, GlnD hydrolyzes PII-UMP to PII and UMP (deuridylylation). Thus, controls uridylylation state and activity of the PII proteins, and plays an important role in the regulation of nitrogen assimilation and metabolism. The polypeptide is Bifunctional uridylyltransferase/uridylyl-removing enzyme (Psychrobacter cryohalolentis (strain ATCC BAA-1226 / DSM 17306 / VKM B-2378 / K5)).